We begin with the raw amino-acid sequence, 482 residues long: Glycogen synthase (482 aa).

Position 15 (Lys-15) interacts with ADP-alpha-D-glucose.

This sequence belongs to the glycosyltransferase 1 family. Bacterial/plant glycogen synthase subfamily.

It catalyses the reaction [(1-&gt;4)-alpha-D-glucosyl](n) + ADP-alpha-D-glucose = [(1-&gt;4)-alpha-D-glucosyl](n+1) + ADP + H(+). The protein operates within glycan biosynthesis; glycogen biosynthesis. In terms of biological role, synthesizes alpha-1,4-glucan chains using ADP-glucose. This is Glycogen synthase from Hydrogenobaculum sp. (strain Y04AAS1).